Here is a 340-residue protein sequence, read N- to C-terminus: GTP 3',8-cyclase (340 aa).

Positions 8 to 227 (KLGRPIRDLR…TMIEQHFEID (220 aa)) constitute a Radical SAM core domain. R17 is a binding site for GTP. [4Fe-4S] cluster is bound by residues C24 and C28. Y30 serves as a coordination point for S-adenosyl-L-methionine. Residue C31 participates in [4Fe-4S] cluster binding. Residue R71 coordinates GTP. G75 provides a ligand contact to S-adenosyl-L-methionine. A GTP-binding site is contributed by T102. S126 provides a ligand contact to S-adenosyl-L-methionine. K163 is a GTP binding site. M197 provides a ligand contact to S-adenosyl-L-methionine. The [4Fe-4S] cluster site is built by C261 and C264. 266-268 (RAR) contacts GTP. Residue C278 participates in [4Fe-4S] cluster binding.

This sequence belongs to the radical SAM superfamily. MoaA family. In terms of assembly, monomer and homodimer. [4Fe-4S] cluster is required as a cofactor.

It catalyses the reaction GTP + AH2 + S-adenosyl-L-methionine = (8S)-3',8-cyclo-7,8-dihydroguanosine 5'-triphosphate + 5'-deoxyadenosine + L-methionine + A + H(+). Its pathway is cofactor biosynthesis; molybdopterin biosynthesis. Functionally, catalyzes the cyclization of GTP to (8S)-3',8-cyclo-7,8-dihydroguanosine 5'-triphosphate. This is GTP 3',8-cyclase from Staphylococcus aureus (strain MRSA252).